The primary structure comprises 301 residues: Phosphatidylcholine:diacylglycerol cholinephosphotransferase 1 (301 aa).

Positions 1–39 (MSAAAAETDVSLRRRSNSLNGNHTNGVAIDGTLDNNNRR) are disordered. 5 helical membrane passes run 88-108 (HWIPCMFAAGLLFFMGVEYTL), 141-161 (VLAALNTVFVGMQTTYIVWTW), 171-191 (IAALFMFTCRGILGYSTQLPL), 202-222 (FPVGNVSFFLFFSGHVAGSMI), and 255-275 (GHYTIDLAVGVGAGILFDSLA). Active-site residues include H216, H256, and D260.

This sequence belongs to the phosphatidylcholine:diacylglycerol cholinephosphotransferase family.

It is found in the membrane. The catalysed reaction is 1,2-ditetradecanoyl-sn-glycero-3-phosphocholine + 1,2-di-(9Z-octadecenoyl)-sn-glycerol = 1,2-ditetradecanoyl-sn-glycerol + 1,2-di-(9Z-octadecenoyl)-sn-glycero-3-phosphocholine. In terms of biological role, functions as a phosphatidylcholine:diacylglycerol cholinephosphotransferase that catalyzes the transfer of the phosphocholine headgroup from phosphatidylcholine (PC) to diacylglycerol, a major reaction for the transfer of 18:1 into phosphatidylcholine for desaturation and also for the reverse transfer of 18:2 and 18:3 into the triacylglycerols synthesis pathway. This chain is Phosphatidylcholine:diacylglycerol cholinephosphotransferase 1, found in Arabidopsis thaliana (Mouse-ear cress).